The sequence spans 150 residues: UPF0178 protein Reut_B5138 (150 aa).

The protein belongs to the UPF0178 family.

In Cupriavidus pinatubonensis (strain JMP 134 / LMG 1197) (Cupriavidus necator (strain JMP 134)), this protein is UPF0178 protein Reut_B5138.